The chain runs to 145 residues: Transthyretin (145 aa).

Positions 1–20 are cleaved as a signal peptide; sequence MASHRLFLLCLAGLVFMSEA. Sulfocysteine is present on Cys28. Residue Lys33 participates in L-thyroxine binding. Glu60 bears the 4-carboxyglutamate mark. Ser70 is modified (phosphoserine). Glu72 is a binding site for L-thyroxine. An N-linked (GlcNAc...) asparagine glycan is attached at Asn116. Ser135 serves as a coordination point for L-thyroxine.

This sequence belongs to the transthyretin family. As to quaternary structure, homotetramer. Dimer of dimers. In the homotetramer, subunits assemble around a central channel that can accommodate two ligand molecules. Interacts with RBP4. Sulfonation of the reactive cysteine Cys-28 enhances the stability of the native conformation of TTR, avoiding misassembly of the protein leading to amyloid formation.

The protein resides in the secreted. Its function is as follows. Thyroid hormone-binding protein. Probably transports thyroxine from the bloodstream to the brain. In Erinaceus europaeus (Western European hedgehog), this protein is Transthyretin (TTR).